The chain runs to 448 residues: Oxysterol-binding protein homolog 6 (448 aa).

Residues 1-42 form a disordered region; the sequence is MGSKKLTVGSDSHRLSKSSFSSNKSSHSATKDQPIDTDDIDE. At serine 16 the chain carries Phosphoserine. Low complexity predominate over residues 17–28; sequence KSSFSSNKSSHS. Positions 54 to 391 are OSBP-related domain (ORD); sequence IISQLRPGCD…PGEDLDYCIY (338 aa). Residues 64-69, 126-129, and 157-158 contribute to the a 1,2-diacyl-sn-glycero-3-phospho-(1D-myo-inositol 4-phosphate) site; these read LTRITL, KPLN, and HH. A 1,2-diacyl-sn-glycero-3-phospho-L-serine-binding positions include 64-69 and asparagine 129; that span reads LTRITL. Position 183 (serine 183) interacts with a 1,2-diacyl-sn-glycero-3-phospho-L-serine. A 1,2-diacyl-sn-glycero-3-phospho-(1D-myo-inositol 4-phosphate) is bound by residues lysine 351, glutamate 355, and arginine 359.

This sequence belongs to the OSBP family. Interacts with the AAA ATPase VPS4; regulates OSH6 membrane association. VPS4 is required for membrane dissociation of OSH6.

It localises to the cytoplasm. Its subcellular location is the cell membrane. It is found in the endoplasmic reticulum membrane. It carries out the reaction a 1,2-diacyl-sn-glycero-3-phospho-L-serine(in) = a 1,2-diacyl-sn-glycero-3-phospho-L-serine(out). Lipid transport protein (LTP) involved in non-vesicular transfer of lipids between membranes. Functions in phosphoinositide-coupled directional transport of various lipids by carrying the lipid molecule in a hydrophobic pocket and transferring it between membranes through the cytosol. Involved in maintenance of intracellular sterol distribution and homeostasis. Catalyzes the lipid countertransport between the endoplasmic reticulum (ER) and the plasma membrane (PM). Specifically exchanges phosphatidylserine (PS) with phosphatidylinositol 4-phosphate (PI4P), delivering phosphatidylserine to the PM in exchange for PI4P, which is delivered to the ER-localized PI4P phosphatase SAC1 for degradation. Thus, by maintaining a PI4P gradient at the ER/PM interface, SAC1 drives PS transport. Binds phosphatidylserine and PI4P in a mutually exclusive manner. Also binds phosphatidic acid (PA). This chain is Oxysterol-binding protein homolog 6, found in Saccharomyces cerevisiae (strain ATCC 204508 / S288c) (Baker's yeast).